Consider the following 344-residue polypeptide: Glycerol-3-phosphate dehydrogenase [NAD(P)+] 2 (344 aa).

Residues Ser12, Trp13, Arg33, Arg34, and Lys107 each coordinate NADPH. Sn-glycerol 3-phosphate-binding residues include Lys107, Gly138, and Ser140. Residue Ala142 coordinates NADPH. Sn-glycerol 3-phosphate-binding residues include Lys193, Asp246, Ser256, Arg257, and Asn258. The active-site Proton acceptor is the Lys193. Arg257 contacts NADPH. Residues Val281 and Glu283 each coordinate NADPH.

This sequence belongs to the NAD-dependent glycerol-3-phosphate dehydrogenase family.

Its subcellular location is the cytoplasm. It catalyses the reaction sn-glycerol 3-phosphate + NAD(+) = dihydroxyacetone phosphate + NADH + H(+). It carries out the reaction sn-glycerol 3-phosphate + NADP(+) = dihydroxyacetone phosphate + NADPH + H(+). It functions in the pathway membrane lipid metabolism; glycerophospholipid metabolism. Functionally, catalyzes the reduction of the glycolytic intermediate dihydroxyacetone phosphate (DHAP) to sn-glycerol 3-phosphate (G3P), the key precursor for phospholipid synthesis. In Salinibacter ruber (strain DSM 13855 / M31), this protein is Glycerol-3-phosphate dehydrogenase [NAD(P)+] 2.